Reading from the N-terminus, the 715-residue chain is MPAESGKRFKPSKYVPVSAAAIFLVGATTLFFAFTCPGLSLYVSPAVPIYNAIMFLFVLANFSMATFMDPGIFPRAEEDEDKEDDFRAPLYKTVEIKGIQVRMKWCATCRFYRPPRCSHCSVCDNCVEEFDHHCPWVNNCIGRRNYRYFFLFLLSLTAHIMGVFGFGLLYVLYHIEELSGVRTAVTMAVMCVAGLFFIPVAGLTGFHVVLVARGRTTNEQVTGKFRGGVNPFTNGCCNNVSRVLCSSPAPRYLGRPKKEKTIVIRPPFLRPEVSDGQITVKIMDNGIQGELRRTKSKGSLEITESQSADAEPPPPPKPDLSRYTGLRTHLGLATNEDSSLLAKDSPPTPTMYKYRPGYSSSSTSAAMPHSSSAKLSRGDSLKEPTSIAESSRHPSYRSEPSLEPESFRSPTFGKSFHFDPLSSGSRSSSLKSAQGTGFELGQLQSIRSEGTTSTSYKSLANQTRNGSLSYDSLLTPSDSPDFESVQAGPEPDPPLGYTSPFLSARLAQQREAERHPRLVPTGPTHREPSPVRYDNLSRHIVASLQEREKLLRQSPPLPGREEEPGLGDSGIQSTPGSGHAPRTSSSSDDSKRSPLGKTPLGRPAVPRFGKPDGLRGRGVGSPEPGPTAPYLGRSMSYSSQKAQPGVSETEEVALQPLLTPKDEVQLKTTYSKSNGQPKSLGSASPGPGQPPLSSPTRGGVKKVSGVGGTTYEISV.

The Cytoplasmic segment spans residues 1 to 13; sequence MPAESGKRFKPSK. The chain crosses the membrane as a helical span at residues 14 to 34; that stretch reads YVPVSAAAIFLVGATTLFFAF. Topologically, residues 35–38 are extracellular; that stretch reads TCPG. The helical transmembrane segment at 39–59 threads the bilayer; it reads LSLYVSPAVPIYNAIMFLFVL. Over 60–148 the chain is Cytoplasmic; that stretch reads ANFSMATFMD…NCIGRRNYRY (89 aa). Tyr91 carries the post-translational modification Phosphotyrosine; by LYN. A DHHC domain is found at 104 to 154; the sequence is KWCATCRFYRPPRCSHCSVCDNCVEEFDHHCPWVNNCIGRRNYRYFFLFLL. Cys134 (S-palmitoyl cysteine intermediate) is an active-site residue. The helical transmembrane segment at 149 to 169 threads the bilayer; it reads FFLFLLSLTAHIMGVFGFGLL. Topologically, residues 170–191 are extracellular; sequence YVLYHIEELSGVRTAVTMAVMC. Residues 192–212 form a helical membrane-spanning segment; it reads VAGLFFIPVAGLTGFHVVLVA. Topologically, residues 213 to 715 are cytoplasmic; the sequence is RGRTTNEQVT…VGGTTYEISV (503 aa). Position 247 is a phosphoserine (Ser247). The interval 289-715 is disordered; it reads GELRRTKSKG…VGGTTYEISV (427 aa). Phosphothreonine is present on Thr294. Phosphoserine is present on residues Ser296 and Ser299. Thr303 bears the Phosphothreonine mark. The residue at position 345 (Ser345) is a Phosphoserine. Phosphothreonine occurs at positions 348 and 350. The segment covering 359-373 has biased composition (low complexity); it reads SSSSTSAAMPHSSSA. Phosphoserine occurs at positions 380, 398, 406, and 409. At Thr411 the chain carries Phosphothreonine. A phosphoserine mark is found at Ser415, Ser425, Ser429, and Ser432. The span at 422-432 shows a compositional bias: low complexity; sequence SSGSRSSSLKS. Thr436 bears the Phosphothreonine mark. The segment covering 442–478 has biased composition (polar residues); sequence QLQSIRSEGTTSTSYKSLANQTRNGSLSYDSLLTPSD. Position 529 is a phosphoserine (Ser529). Residue Tyr533 is modified to Phosphotyrosine; by FYN. Position 554 is a phosphoserine (Ser554). Arg617 is subject to Omega-N-methylarginine. The residue at position 621 (Ser621) is a Phosphoserine. Thr659 is modified (phosphothreonine). Over residues 666–677 the composition is skewed to polar residues; that stretch reads LKTTYSKSNGQP. Phosphoserine occurs at positions 684 and 694. Arg697 is subject to Omega-N-methylarginine.

Belongs to the DHHC palmitoyltransferase family. ERF2/ZDHHC9 subfamily. Phosphorylation regulates association with endocytic proteins and its subcellular localization. Phosphorylation by LYN during fatty acid uptake leads to inactivation of the activity. In terms of processing, autopalmitoylated. Palmitoylation of the C-terminal tail regulates stimulation-dependent plasma membrane motility.

It localises to the cell membrane. It is found in the synapse. It catalyses the reaction L-cysteinyl-[protein] + hexadecanoyl-CoA = S-hexadecanoyl-L-cysteinyl-[protein] + CoA. Functionally, palmitoyltransferase that catalyzes the addition of palmitate onto various protein substrates such as CTNND2, CD36, GSDMD, NLRP3, NOD1, NOD2, STAT3 and S1PR1 thus plays a role in various biological processes including cell adhesion, inflammation, fatty acid uptake, bacterial sensing or cardiac functions. Plays an important role in the regulation of synapse efficacy by mediating palmitoylation of delta-catenin/CTNND2, thereby increasing synaptic delivery and surface stabilization of alpha-amino-3-hydroxy-5-methyl-4-isoxazole propionic acid receptors (AMPARs). Under basal conditions, remains at the synaptic membrane through FYN-mediated phosphorylation that prevents association with endocytic proteins. Neuronal activity enhances the internalization and trafficking of DHHC5 from spines to dendritic shafts where it palmitoylates delta-catenin/CTNND2. Regulates cell adhesion at the plasma membrane by palmitoylating GOLGA7B and DSG2. Plays a role in innate immune response by mediating the palmitoylation of NOD1 and NOD2 and their proper recruitment to the bacterial entry site and phagosomes. Also participates in fatty acid uptake by palmitoylating CD36 and thereby targeting it to the plasma membrane. Upon binding of fatty acids to CD36, gets phosphorylated by LYN leading to inactivation and subsequent CD36 caveolar endocytosis. Controls oligodendrocyte development by catalyzing STAT3 palmitoylation. Acts as a regulator of inflammatory response by mediating palmitoylation of NLRP3 and GSDMD. Palmitoylates NLRP3 to promote inflammasome assembly and activation. Activates pyroptosis by catalyzing palmitoylation of gasdermin-D (GSDMD), thereby promoting membrane translocation and pore formation of GSDMD. The chain is Palmitoyltransferase ZDHHC5 from Homo sapiens (Human).